Reading from the N-terminus, the 149-residue chain is Large ribosomal subunit protein bL9 (149 aa).

Belongs to the bacterial ribosomal protein bL9 family.

Functionally, binds to the 23S rRNA. The polypeptide is Large ribosomal subunit protein bL9 (Actinobacillus succinogenes (strain ATCC 55618 / DSM 22257 / CCUG 43843 / 130Z)).